The primary structure comprises 216 residues: MRINTVLFDLDGTLINTNELIISSFLHTLNTYYPNQYKREDVLPFIGPSLHDTFSKIDESKVEEMITSYREFNHDHHDELVEEYETVYETVRELKKQGYKVGIVTTKARQTVEMGLQLSKLDEFFDVVVTIDDVEHVKPHPEPLQKALELLDAKPEEALMVGDNHHDIVGGQNAGTKTAAVSWTLKGRAYLEAYKPDFMLDKMSDLLPILSNMNRS.

The Nucleophile role is filled by D9.

It belongs to the HAD-like hydrolase superfamily. PpaX family. It depends on Mg(2+) as a cofactor.

The enzyme catalyses diphosphate + H2O = 2 phosphate + H(+). Functionally, hydrolyzes pyrophosphate formed during P-Ser-HPr dephosphorylation by HPrK/P. Might play a role in controlling the intracellular pyrophosphate pool. In Bacillus cereus (strain G9842), this protein is Pyrophosphatase PpaX.